A 336-amino-acid polypeptide reads, in one-letter code: Speedy protein E1 (336 aa).

The disordered stretch occupies residues 16-50 (GVDPSPPCRSLGWKRKREWSDESEEEPEKELAPEP). A compositionally biased stretch (acidic residues) spans 36-50 (DESEEEPEKELAPEP).

Belongs to the Speedy/Ringo family. As to expression, predominantly expressed in testis and heart.

In Homo sapiens (Human), this protein is Speedy protein E1.